A 199-amino-acid polypeptide reads, in one-letter code: Glycerol-3-phosphate acyltransferase (199 aa).

5 helical membrane passes run 5 to 25, 51 to 71, 79 to 99, 112 to 132, and 153 to 173; these read AFLV…VALV, KLGV…VLCA, VFLS…VFLY, VFLG…VAVI, and CAWL…GLVI.

It belongs to the PlsY family. In terms of assembly, probably interacts with PlsX.

It localises to the cell inner membrane. The enzyme catalyses an acyl phosphate + sn-glycerol 3-phosphate = a 1-acyl-sn-glycero-3-phosphate + phosphate. It functions in the pathway lipid metabolism; phospholipid metabolism. Functionally, catalyzes the transfer of an acyl group from acyl-phosphate (acyl-PO(4)) to glycerol-3-phosphate (G3P) to form lysophosphatidic acid (LPA). This enzyme utilizes acyl-phosphate as fatty acyl donor, but not acyl-CoA or acyl-ACP. This is Glycerol-3-phosphate acyltransferase from Solidesulfovibrio magneticus (strain ATCC 700980 / DSM 13731 / RS-1) (Desulfovibrio magneticus).